The primary structure comprises 288 residues: Acetyl-coenzyme A carboxylase carboxyl transferase subunit beta (288 aa).

Positions 34 to 288 (LFAKCPGCKQ…TLLSFHGGVQ (255 aa)) constitute a CoA carboxyltransferase N-terminal domain. Zn(2+)-binding residues include cysteine 38, cysteine 41, cysteine 56, and cysteine 59. The C4-type zinc-finger motif lies at 38 to 59 (CPGCKQAIYQKDLGQAKICPNC).

Belongs to the AccD/PCCB family. Acetyl-CoA carboxylase is a heterohexamer composed of biotin carboxyl carrier protein (AccB), biotin carboxylase (AccC) and two subunits each of ACCase subunit alpha (AccA) and ACCase subunit beta (AccD). The cofactor is Zn(2+).

The protein resides in the cytoplasm. It catalyses the reaction N(6)-carboxybiotinyl-L-lysyl-[protein] + acetyl-CoA = N(6)-biotinyl-L-lysyl-[protein] + malonyl-CoA. It functions in the pathway lipid metabolism; malonyl-CoA biosynthesis; malonyl-CoA from acetyl-CoA: step 1/1. Functionally, component of the acetyl coenzyme A carboxylase (ACC) complex. Biotin carboxylase (BC) catalyzes the carboxylation of biotin on its carrier protein (BCCP) and then the CO(2) group is transferred by the transcarboxylase to acetyl-CoA to form malonyl-CoA. The protein is Acetyl-coenzyme A carboxylase carboxyl transferase subunit beta of Streptococcus thermophilus (strain ATCC BAA-491 / LMD-9).